The primary structure comprises 147 residues: Myoglobin (147 aa).

A Globin domain is found at 2-141; sequence ADHDLVLKCW…VIGDIDGYYK (140 aa). H60 provides a ligand contact to nitrite. H60 lines the O2 pocket. Residue H89 coordinates heme b.

It belongs to the globin family. As to quaternary structure, monomeric.

It localises to the cytoplasm. The protein resides in the sarcoplasm. It carries out the reaction Fe(III)-heme b-[protein] + nitric oxide + H2O = Fe(II)-heme b-[protein] + nitrite + 2 H(+). The enzyme catalyses H2O2 + AH2 = A + 2 H2O. Monomeric heme protein which primary function is to store oxygen and facilitate its diffusion within muscle tissues. Reversibly binds oxygen through a pentacoordinated heme iron and enables its timely and efficient release as needed during periods of heightened demand. Depending on the oxidative conditions of tissues and cells, and in addition to its ability to bind oxygen, it also has a nitrite reductase activity whereby it regulates the production of bioactive nitric oxide. Under stress conditions, like hypoxia and anoxia, it also protects cells against reactive oxygen species thanks to its pseudoperoxidase activity. This chain is Myoglobin (mb), found in Danio rerio (Zebrafish).